The sequence spans 31 residues: U14-ctenitoxin-Co1c (31 aa).

As to expression, expressed by the venom gland.

It localises to the secreted. Not toxic to mice by intracerebroventricular injection. The chain is U14-ctenitoxin-Co1c from Ctenus ornatus (Brazilian spider).